The following is a 788-amino-acid chain: Bifunctional purine biosynthetic protein ADE1 (788 aa).

The tract at residues 1-429 (MSLRILLVGN…NRKDIAYKAF (429 aa)) is GARS. The ATP-grasp domain occupies 114–323 (KDFMKKHNIP…LAEVMLACVE (210 aa)). ATP is bound at residue 140 to 201 (VKKVGHRVVI…EEFLEGDELS (62 aa)). Mg(2+)-binding residues include Glu-291 and Asn-293. Residues 439-752 (ITYAQAGVSI…VVKQEKVAEV (314 aa)) are AIRS.

The protein in the N-terminal section; belongs to the GARS family. In the C-terminal section; belongs to the AIR synthase family. Requires Mg(2+) as cofactor. Mn(2+) is required as a cofactor.

It is found in the cytoplasm. Its subcellular location is the cytosol. It carries out the reaction 5-phospho-beta-D-ribosylamine + glycine + ATP = N(1)-(5-phospho-beta-D-ribosyl)glycinamide + ADP + phosphate + H(+). The enzyme catalyses 2-formamido-N(1)-(5-O-phospho-beta-D-ribosyl)acetamidine + ATP = 5-amino-1-(5-phospho-beta-D-ribosyl)imidazole + ADP + phosphate + H(+). It functions in the pathway purine metabolism; IMP biosynthesis via de novo pathway; 5-amino-1-(5-phospho-D-ribosyl)imidazole from N(2)-formyl-N(1)-(5-phospho-D-ribosyl)glycinamide: step 2/2. The protein operates within purine metabolism; IMP biosynthesis via de novo pathway; N(1)-(5-phospho-D-ribosyl)glycinamide from 5-phospho-alpha-D-ribose 1-diphosphate: step 2/2. Functionally, catalyzes the second and fifth step in the 'de novo' purine biosynthesis pathway; contains phosphoribosylamine--glycine ligase (GARS) and phosphoribosylformylglycinamidine cyclo-ligase (AIRS) activities. In Yarrowia lipolytica (strain CLIB 122 / E 150) (Yeast), this protein is Bifunctional purine biosynthetic protein ADE1.